We begin with the raw amino-acid sequence, 400 residues long: MGGYSSKPRKGMGTNLSVPNPLGFLPDHQLDPAFGANSNNPDWDFNPNKDPWPEAWQVGAGAFGPGFTPPHGSLLGWSPQAQGILTTVPATPPPASTNRQSGRQPTPISPPLRDSHPQAMQWNSTTFHQALLDPRVRGLYFPAGGSSSGTANPVPTTASPISSIFSRTGDPVPKMENTTSGFLGPLLVLQAGFFLLTRILTIPQSLDSWWTSLNFLGGAPACPGQNSQSPTSNHSPTSCPPICPGYRWMCLRRFIIFLFILLLCLIFLLVLLDYQGMLPVCPLIPGTSTTSTGPCKTCTTPAQGTSMFPSCCCTKPSDGNCTCIPIPSSWAFAKFLWEWASVRFSWLSLLAPFVQWFVGLSPTVWLSVIWMMWYWGPSLYNILSPFLPLLPIFFCLWVYI.

At M1 the chain carries N-acetylmethionine. Disordered stretches follow at residues 1-42 and 84-118; these read MGGY…NNPD and ILTT…SHPQ. A lipid anchor (N-myristoyl glycine; by host) is attached at G2. The tract at residues 2–119 is pre-S1; the sequence is GGYSSKPRKG…PPLRDSHPQA (118 aa). The segment at 2–174 is pre-S; sequence GGYSSKPRKG…FSRTGDPVPK (173 aa). The Virion surface; in external conformation portion of the chain corresponds to 2 to 181; that stretch reads GGYSSKPRKG…VPKMENTTSG (180 aa). Residues 2–253 lie on the Intravirion; in internal conformation side of the membrane; it reads GGYSSKPRKG…PGYRWMCLRR (252 aa). Y4 carries an N-linked (GlcNAc...) asparagine glycan. The tract at residues 120-174 is pre-S2; it reads MQWNSTTFHQALLDPRVRGLYFPAGGSSSGTANPVPTTASPISSIFSRTGDPVPK. The chain crosses the membrane as a helical span at residues 182 to 202; that stretch reads FLGPLLVLQAGFFLLTRILTI. At 203–253 the chain is on the intravirion; in external conformation side; that stretch reads PQSLDSWWTSLNFLGGAPACPGQNSQSPTSNHSPTSCPPICPGYRWMCLRR. The chain crosses the membrane as a helical span at residues 254–274; it reads FIIFLFILLLCLIFLLVLLDY. Residues 275 to 348 lie on the Virion surface side of the membrane; that stretch reads QGMLPVCPLI…WASVRFSWLS (74 aa). An N-linked (GlcNAc...) asparagine; by host glycan is attached at N320. The chain crosses the membrane as a helical span at residues 349–369; that stretch reads LLAPFVQWFVGLSPTVWLSVI. Residues 370–375 are Intravirion-facing; the sequence is WMMWYW. Residues 376-398 traverse the membrane as a helical segment; it reads GPSLYNILSPFLPLLPIFFCLWV. Topologically, residues 399-400 are virion surface; it reads YI.

This sequence belongs to the orthohepadnavirus major surface antigen family. In terms of assembly, in its internal form (Li-HBsAg), interacts with the capsid protein and with the isoform S. Interacts with host chaperone CANX. Associates with host chaperone CANX through its pre-S2 N glycan; this association may be essential for isoform M proper secretion. As to quaternary structure, interacts with isoform L. Interacts with the antigens of satellite virus HDV (HDVAgs); this interaction is required for encapsidation of HDV genomic RNA. Isoform M is N-terminally acetylated by host at a ratio of 90%, and N-glycosylated by host at the pre-S2 region. In terms of processing, myristoylated.

It is found in the virion membrane. Its function is as follows. The large envelope protein exists in two topological conformations, one which is termed 'external' or Le-HBsAg and the other 'internal' or Li-HBsAg. In its external conformation the protein attaches the virus to cell receptors and thereby initiating infection. This interaction determines the species specificity and liver tropism. This attachment induces virion internalization predominantly through caveolin-mediated endocytosis. The large envelope protein also assures fusion between virion membrane and endosomal membrane. In its internal conformation the protein plays a role in virion morphogenesis and mediates the contact with the nucleocapsid like a matrix protein. In terms of biological role, the middle envelope protein plays an important role in the budding of the virion. It is involved in the induction of budding in a nucleocapsid independent way. In this process the majority of envelope proteins bud to form subviral lipoprotein particles of 22 nm of diameter that do not contain a nucleocapsid. In Homo sapiens (Human), this protein is Large envelope protein.